Here is a 432-residue protein sequence, read N- to C-terminus: UDP-N-acetylmuramoylalanine--D-glutamate ligase (432 aa).

98–104 (GTNGKST) is a binding site for ATP.

This sequence belongs to the MurCDEF family.

The protein localises to the cytoplasm. It catalyses the reaction UDP-N-acetyl-alpha-D-muramoyl-L-alanine + D-glutamate + ATP = UDP-N-acetyl-alpha-D-muramoyl-L-alanyl-D-glutamate + ADP + phosphate + H(+). It functions in the pathway cell wall biogenesis; peptidoglycan biosynthesis. Cell wall formation. Catalyzes the addition of glutamate to the nucleotide precursor UDP-N-acetylmuramoyl-L-alanine (UMA). This is UDP-N-acetylmuramoylalanine--D-glutamate ligase from Fusobacterium nucleatum subsp. nucleatum (strain ATCC 25586 / DSM 15643 / BCRC 10681 / CIP 101130 / JCM 8532 / KCTC 2640 / LMG 13131 / VPI 4355).